Reading from the N-terminus, the 405-residue chain is Envelope glycoprotein M (405 aa).

The Intravirion portion of the chain corresponds to 1–17; the sequence is MKSSKNDTFVYRTWFKT. A helical membrane pass occupies residues 18–38; the sequence is LVVYFVMFVMSAVVPITAMFP. The Virion surface segment spans residues 39–76; the sequence is NLGYPCYFNALVDYGALNLTNYNLAHHLTPTLYLEPPE. Residues 77–97 traverse the membrane as a helical segment; the sequence is MFVYITLVFIADCVAFIYYAC. Residues 98-121 are Intravirion-facing; that stretch reads GEVALIKARKKVSGLTDLSAWVSA. Residues 122 to 142 traverse the membrane as a helical segment; sequence VGSPTVLFLAILKLWSIQVFI. Residues 143-149 lie on the Virion surface side of the membrane; it reads QVLSYKH. A helical membrane pass occupies residues 150–170; sequence VFLSAFVYFLHFLASVLHACA. Residues 171–192 lie on the Intravirion side of the membrane; it reads CVTRFSPVWVVKAQDNSIPQDT. A helical transmembrane segment spans residues 193-215; the sequence is FLWWVVFYLKPIVTNLYLGCLAL. Over 216 to 245 the chain is Virion surface; the sequence is ETLVFSLSVFLALGNSFYFMVGDMVLGAVN. Residues 246–266 traverse the membrane as a helical segment; that stretch reads LFLVLPIFWYILTEVWLASFL. Residue Arg267 is a topological domain, intravirion. The helical transmembrane segment at 268 to 288 threads the bilayer; the sequence is HNFGFYCGMFIASIILILPLV. The Virion surface portion of the chain corresponds to 289-299; sequence RYEAVFVSAKL. Residues 300-320 form a helical membrane-spanning segment; the sequence is HTTVAINVAIIPILCSVAMLI. The Intravirion segment spans residues 321 to 405; the sequence is RICRIFKSMR…TTDSEEEIFP (85 aa). The segment at 346–405 is disordered; it reads LESEPRPRPSRTPSPGRNRRRSSTSSSSSRSTRRQRPVSTQALISSVLPMTTDSEEEIFP. Positions 386–397 are enriched in polar residues; that stretch reads QALISSVLPMTT.

Belongs to the herpesviridae glycoprotein M family. In terms of assembly, interacts (via N-terminus) with gN (via N-terminus). The gM-gN heterodimer forms the gCII complex.

It is found in the virion membrane. The protein localises to the host Golgi apparatus. Its subcellular location is the host trans-Golgi network. The protein resides in the host endosome membrane. It localises to the host nucleus inner membrane. Functionally, envelope glycoprotein important for virion assembly and egress. Plays a role in the correct incorporation of gH-gL into virion membrane. Directs the glycoprotein N (gN) to the host trans-Golgi network. The sequence is that of Envelope glycoprotein M from Homo sapiens (Human).